A 395-amino-acid chain; its full sequence is Putative 8-amino-7-oxononanoate synthase (395 aa).

Residue Arg23 participates in substrate binding. Gly110–Phe111 contacts pyridoxal 5'-phosphate. His135 is a binding site for substrate. Residues Ser182, Asp207–His210, and Thr239–Lys242 each bind pyridoxal 5'-phosphate. Lys242 is subject to N6-(pyridoxal phosphate)lysine. Thr356 lines the substrate pocket.

The protein belongs to the class-II pyridoxal-phosphate-dependent aminotransferase family. BioF subfamily. As to quaternary structure, homodimer. Pyridoxal 5'-phosphate is required as a cofactor.

It carries out the reaction 6-carboxyhexanoyl-[ACP] + L-alanine + H(+) = (8S)-8-amino-7-oxononanoate + holo-[ACP] + CO2. The protein operates within cofactor biosynthesis; biotin biosynthesis. In terms of biological role, catalyzes the decarboxylative condensation of pimeloyl-[acyl-carrier protein] and L-alanine to produce 8-amino-7-oxononanoate (AON), [acyl-carrier protein], and carbon dioxide. In Bacillus anthracis, this protein is Putative 8-amino-7-oxononanoate synthase (bioF).